The chain runs to 91 residues: Acyl carrier protein AsbD (91 aa).

In terms of domain architecture, Carrier spans 4 to 82 (EALKNAVLKI…SLLDFMEELQ (79 aa)). At serine 40 the chain carries O-(pantetheine 4'-phosphoryl)serine.

It belongs to the acyl carrier protein (ACP) family. In terms of processing, activated by the transfer of a 4'-phosphopantetheine group from CoA to Ser-40.

It participates in siderophore biosynthesis; petrobactin biosynthesis. In terms of biological role, involved in the biosynthesis of petrobactin, a catecholate siderophore that functions in both iron acquisition and virulence. Aryl-carrier protein that activates 3,4-dihydroxybenzoate (3,4-DHBA) prior to its incorporation into petrobactin. The polypeptide is Acyl carrier protein AsbD (Bacillus anthracis).